The sequence spans 324 residues: Putative GTPase PYRAB02490 (324 aa).

GTP-binding positions include 52–60 (GPPGAGKST), aspartate 194, and 229–231 (VAT).

This sequence belongs to the SIMIBI class G3E GTPase family. ArgK/MeaB subfamily.

May have GTPase activity. May also bind and hydrolyze ATP. May function as chaperone. This Pyrococcus abyssi (strain GE5 / Orsay) protein is Putative GTPase PYRAB02490.